A 263-amino-acid polypeptide reads, in one-letter code: Putative methyltransferase DDB_G0268948 (263 aa).

It belongs to the methyltransferase superfamily.

In Dictyostelium discoideum (Social amoeba), this protein is Putative methyltransferase DDB_G0268948.